Here is a 153-residue protein sequence, read N- to C-terminus: Ribosome maturation factor RimP (153 aa).

Belongs to the RimP family.

The protein localises to the cytoplasm. In terms of biological role, required for maturation of 30S ribosomal subunits. This Burkholderia mallei (strain NCTC 10229) protein is Ribosome maturation factor RimP.